The primary structure comprises 255 residues: H-2 class II histocompatibility antigen, E-D alpha chain (255 aa).

The first 25 residues, 1-25 (MATIGALVLRFFFIAVLMSSQKSWA), serve as a signal peptide directing secretion. The alpha-1 stretch occupies residues 26 to 109 (IKEEHTIIQA…ERSNNTPDAN (84 aa)). Topologically, residues 26–216 (IKEEHTIIQA…EKTLLPETKE (191 aa)) are extracellular. Residues 110-203 (VAPEVTVLSR…GLEEPLRKTW (94 aa)) are alpha-2. The Ig-like C1-type domain maps to 112 to 204 (PEVTVLSRSP…LEEPLRKTWE (93 aa)). Cys-132 and Cys-188 are joined by a disulfide. N-linked (GlcNAc...) asparagine glycosylation is present at Asn-143. Positions 204–216 (EFEEKTLLPETKE) are connecting peptide. A helical membrane pass occupies residues 217 to 242 (NVMCALGLFVGLVGIVVGIILIMKGI). Topologically, residues 243 to 255 (KKRNVVERRQGAL) are cytoplasmic.

It belongs to the MHC class II family.

The protein resides in the membrane. The polypeptide is H-2 class II histocompatibility antigen, E-D alpha chain (H2-Ea) (Mus musculus (Mouse)).